A 458-amino-acid chain; its full sequence is MRFMQRSKDSLAKWLSAILPVVIVGLVGLFAVTVIRDYGRETAAARQTLLEKGSVLIRALESGSRVGMGMRMHHAQQQALLEEMAGQPGVRWFAVTDEQGTIVMHSNSGMVGKQLYSPQEMQQLHPGDEEVWRRIDSADGEPVLEIYRQFQPMFAAGMHRMRHMQQYAATPQAIFIAFDASNIVSAEDREQRNTLIILFALATVLLASVLSFFWYRRYLRSRQLLQDEMKRKEKLVALGHLAAGVAHEIRNPLSSIKGLAKYFAERAPAGGEAHQLAQVMAKEADRLNRVVSELLELVKPTHLALQAVDLNTLINHSLQLVSQDANCREIQLRFTANDTLPEIQADPDRLTQVLLNLYLNAIQAIGQHGVISVTASESGAGVKISVTDSGKGIAADQLEAIFTPYFTTKAEGTGLGLAVVHNIVEQHGGTIQVASLEGKGARFTLWLPVNITRKDPQG.

The Cytoplasmic portion of the chain corresponds to 1 to 14 (MRFMQRSKDSLAKW). A helical membrane pass occupies residues 15–35 (LSAILPVVIVGLVGLFAVTVI). Residues 36–194 (RDYGRETAAA…SAEDREQRNT (159 aa)) are Periplasmic-facing. Residues 195–215 (LIILFALATVLLASVLSFFWY) form a helical membrane-spanning segment. Residues 216–458 (RRYLRSRQLL…VNITRKDPQG (243 aa)) are Cytoplasmic-facing. One can recognise a Histidine kinase domain in the interval 244 to 451 (GVAHEIRNPL…RFTLWLPVNI (208 aa)). Histidine 247 is subject to Phosphohistidine; by autocatalysis.

Autophosphorylated.

The protein resides in the cell inner membrane. It catalyses the reaction ATP + protein L-histidine = ADP + protein N-phospho-L-histidine.. With respect to regulation, activity of the ZraS/ZraR two-component system is repressed by the zinc-bound form of ZraP, which probably interacts with the periplasmic region of ZraS. In terms of biological role, part of the Zra signaling pathway, an envelope stress response (ESR) system composed of the periplasmic accessory protein ZraP, the histidine kinase ZraS and the transcriptional regulator ZraR. The ZraPSR system contributes to antibiotic resistance and is important for membrane integrity in the presence of membrane-targeting biocides. ZraS is a member of the two-component regulatory system ZraS/ZraR. Functions as a membrane-associated sensor kinase that phosphorylates ZraR in response to high concentrations of Zn(2+) or Pb(2+) in the medium. The polypeptide is Sensor histidine kinase ZraS (zraS) (Escherichia coli O157:H7).